A 252-amino-acid polypeptide reads, in one-letter code: 3-dehydroquinate dehydratase (252 aa).

3-dehydroquinate-binding positions include serine 21, 46-48 (EWR), and arginine 82. Histidine 143 acts as the Proton donor/acceptor in catalysis. Lysine 170 serves as the catalytic Schiff-base intermediate with substrate. 3 residues coordinate 3-dehydroquinate: arginine 213, serine 232, and glutamine 236.

It belongs to the type-I 3-dehydroquinase family. As to quaternary structure, homodimer.

The catalysed reaction is 3-dehydroquinate = 3-dehydroshikimate + H2O. It functions in the pathway metabolic intermediate biosynthesis; chorismate biosynthesis; chorismate from D-erythrose 4-phosphate and phosphoenolpyruvate: step 3/7. Its function is as follows. Involved in the third step of the chorismate pathway, which leads to the biosynthesis of aromatic amino acids. Catalyzes the cis-dehydration of 3-dehydroquinate (DHQ) and introduces the first double bond of the aromatic ring to yield 3-dehydroshikimate. The sequence is that of 3-dehydroquinate dehydratase from Salmonella agona (strain SL483).